Reading from the N-terminus, the 406-residue chain is MDLLLTNARLVTLQSGEMGYQPSTPMSIGIKAGKIHYLGIDTALAATKQIDLKGKLVTPGLIDCHTHLVYAGNRSNEFEMRLQGVPYQEIARQGGGILSTVYGTRQASEAQLLEQTLPRLDGLLASGVTSVEIKSGYGLTLVDEIKMLRVAKSLSQHRLVKVTPTLLAAHALPPEFTGRANDYIEFICQEIIPVVAEEQLATSVDVFCESIGFDLAQTERVYACAVDHGLRVKGHTEQLSNLGGTALTARYQGLSADHIEFLDRAGVEALARSSTVATLLPGAFYFLRETQLPPIELLRQFGVPMAIASDVNPGTSPFCDLTLMMNMACTLFRLTPEEALRGVTQHAAQALGYAESRGQIKTGYDADLAIWQIEHPADLSYQVGTQRLFARVVDGQFEQHKECCDE.

The Fe(3+) site is built by His65 and His67. His65 and His67 together coordinate Zn(2+). 4-imidazolone-5-propanoate-binding residues include Arg74, Tyr137, and His170. Tyr137 is a binding site for N-formimidoyl-L-glutamate. His235 provides a ligand contact to Fe(3+). His235 is a binding site for Zn(2+). Residue Gln238 participates in 4-imidazolone-5-propanoate binding. Asp310 contacts Fe(3+). Asp310 lines the Zn(2+) pocket. Residues Asn312 and Gly314 each contribute to the N-formimidoyl-L-glutamate site. Residue Thr315 participates in 4-imidazolone-5-propanoate binding.

The protein belongs to the metallo-dependent hydrolases superfamily. HutI family. Requires Zn(2+) as cofactor. It depends on Fe(3+) as a cofactor.

Its subcellular location is the cytoplasm. The enzyme catalyses 4-imidazolone-5-propanoate + H2O = N-formimidoyl-L-glutamate. The protein operates within amino-acid degradation; L-histidine degradation into L-glutamate; N-formimidoyl-L-glutamate from L-histidine: step 3/3. In terms of biological role, catalyzes the hydrolytic cleavage of the carbon-nitrogen bond in imidazolone-5-propanoate to yield N-formimidoyl-L-glutamate. It is the third step in the universal histidine degradation pathway. This is Imidazolonepropionase from Vibrio vulnificus (strain YJ016).